Here is a 175-residue protein sequence, read N- to C-terminus: ADP-ribosylation factor 6 (175 aa).

Gly2 carries the N-myristoyl glycine lipid modification. Lys3 carries N6-myristoyl lysine lipidation. Residues 23-28 (AAGKTT), 41-44 (TIPT), 63-67 (DVGGQ), 122-125 (NKQD), and 155-156 (CA) contribute to the GTP site.

It belongs to the small GTPase superfamily. Arf family. Interacts (when activated) with GGA1, GGA2 and GGA3; the interaction is required for proper subcellular location of GGA1, GGA2 and GGA3. Interacts with PIP5K1C. Interacts with USP6 (via Rab-GAP TBC domain). Interacts with RAB11FIP3 and RAB11FIP4. Interacts with HERC1. Interacts with ARHGAP21. Interacts with ASAP3; the interaction is stabilized by calcium ions. Interacts with NCS1/FREQ at the plasma membrane. Interacts with TBC1D24. Interacts with ECPAS. Interacts with MICALL1. Interacts with SPAG9 homodimers, forming heterotetramers. Interacts with CYTH3. Interacts with ASAP2. Interacts with UACA. Interacts with KIF23, forming heterodimers and heterotetramers. Interacts with C9orf72. Interacts (GTP-bound form) with TJAP1/PILT. Interacts with PRKAA2. Interacts with CD36 (when palmitoylated); this interaction mediates CD36 transport from the Golgi to the plasma membrane. Interacts with APBB1. In terms of assembly, (Microbial infection) Interacts with the V.cholerae enterotoxin subunit A1; this causes a conformation change so that the toxin can bind NAD and catalyze the ADP-ribosylation of Gs alpha. As to quaternary structure, (Microbial infection) Interacts with EspG from enteropathogenic E.coli. (Microbial infection) Identified in a complex with RAB1A and EspG from enteropathogenic E.coli. In terms of assembly, (Microbial infection) Interacts with human enterovirus 71 protein VP1. Post-translationally, GTP-bound form is myristoylated on Lys-3 by NMT1 and NMT2, allowing ARF6 to remain on membranes during the GTPase cycle, thereby promoting its activity. GDP-bound inactive form is demyristoylated on Lys-3 by SIRT2 at early endosomes or endocytic recycling compartment to allow its efficient activation by a guanine exchange factor (GEF) after GDP release. As to expression, ubiquitous, with higher levels in heart, substantia nigra, and kidney.

The protein resides in the cytoplasm. Its subcellular location is the cytosol. It localises to the cell membrane. It is found in the endosome membrane. The protein localises to the recycling endosome membrane. The protein resides in the cell projection. Its subcellular location is the filopodium membrane. It localises to the ruffle. It is found in the cleavage furrow. The protein localises to the midbody. The protein resides in the midbody ring. Its subcellular location is the early endosome membrane. It localises to the golgi apparatus. It is found in the trans-Golgi network membrane. The enzyme catalyses GTP + H2O = GDP + phosphate + H(+). With respect to regulation, activation is generally mediated by a guanine exchange factor (GEF), while inactivation through hydrolysis of bound GTP is catalyzed by a GTPase activating protein (GAP). Activated by ASAP3. Inactivated by ACAP1 and ACAP2. Activated by NGF via NTRK1. Activated by PRKAA2 through its C-terminal regulatory domain. GTP-binding protein involved in protein trafficking that regulates endocytic recycling and cytoskeleton remodeling. GTP-bound form plays an important role in the transport of multiple palmitoylated proteins form the Golgi to the plasma membrane. Required for normal completion of mitotic cytokinesis. Plays a role in the reorganization of the actin cytoskeleton and the formation of stress fibers. Involved in the regulation of dendritic spine development, contributing to the regulation of dendritic branching and filopodia extension. Potentiates the neurite outgrowth in primary neurons by interacting with the molecular adapter APBB1. Plays an important role in membrane trafficking, during junctional remodeling and epithelial polarization. Regulates surface levels of adherens junction proteins such as CDH1. Required for NTRK1 sorting to the recycling pathway from early endosomes. In terms of biological role, (Microbial infection) Functions as an allosteric activator of the cholera toxin catalytic subunit, an ADP-ribosyltransferase. Its function is as follows. (Microbial infection) Plays a key role in the endocytosis of enterovirus 71 and thus viral entry into brain microvascular endothelial cells. This chain is ADP-ribosylation factor 6, found in Homo sapiens (Human).